Here is a 449-residue protein sequence, read N- to C-terminus: GTPase Der (449 aa).

2 consecutive EngA-type G domains span residues 3-167 (AVIA…PTSE) and 178-351 (PRIA…IDSR). GTP contacts are provided by residues 9-16 (GRPNVGKS), 56-60 (DTGGF), 119-122 (NKMD), 184-191 (GRPNVGKS), 231-235 (DTAGM), and 296-299 (NKWD). Residues 352–436 (RHFSTAELNR…PLRLVFRQGE (85 aa)) enclose the KH-like domain.

It belongs to the TRAFAC class TrmE-Era-EngA-EngB-Septin-like GTPase superfamily. EngA (Der) GTPase family. In terms of assembly, associates with the 50S ribosomal subunit.

Functionally, GTPase that plays an essential role in the late steps of ribosome biogenesis. The polypeptide is GTPase Der (Acidithiobacillus ferrooxidans (strain ATCC 23270 / DSM 14882 / CIP 104768 / NCIMB 8455) (Ferrobacillus ferrooxidans (strain ATCC 23270))).